Consider the following 82-residue polypeptide: Cysteine proteinase inhibitor A (82 aa).

It belongs to the cystatin family.

Functionally, strong inhibitor of papain and ficin but poor inhibitor of cathepsin H, B and L. The protein is Cysteine proteinase inhibitor A of Helianthus annuus (Common sunflower).